The following is a 177-amino-acid chain: Gamma-crystallin M1-2 (177 aa).

Beta/gamma crystallin 'Greek key' domains follow at residues 2-40 (GKII…RVEN) and 41-83 (GCWM…RLLS). Residues 84–90 (QNLGIGT) are connecting peptide. 2 consecutive Beta/gamma crystallin 'Greek key' domains span residues 91-131 (NKLR…NVLD) and 132-174 (GYWI…RRVI).

This sequence belongs to the beta/gamma-crystallin family. In terms of assembly, monomer.

In terms of biological role, crystallins are the dominant structural components of the vertebrate eye lens. The chain is Gamma-crystallin M1-2 from Aquarana catesbeiana (American bullfrog).